We begin with the raw amino-acid sequence, 128 residues long: Glycine cleavage system H protein (128 aa).

One can recognise a Lipoyl-binding domain in the interval 22–104; sequence TALVGVTDYA…YASGWLVKIK (83 aa). Position 63 is an N6-lipoyllysine (K63).

This sequence belongs to the GcvH family. In terms of assembly, the glycine cleavage system is composed of four proteins: P, T, L and H. The cofactor is (R)-lipoate.

In terms of biological role, the glycine cleavage system catalyzes the degradation of glycine. The H protein shuttles the methylamine group of glycine from the P protein to the T protein. In Halothermothrix orenii (strain H 168 / OCM 544 / DSM 9562), this protein is Glycine cleavage system H protein.